Consider the following 372-residue polypeptide: Protein RecA (372 aa).

Position 81-88 (81-88 (GPESSGKT)) interacts with ATP.

Belongs to the RecA family.

The protein resides in the cytoplasm. Can catalyze the hydrolysis of ATP in the presence of single-stranded DNA, the ATP-dependent uptake of single-stranded DNA by duplex DNA, and the ATP-dependent hybridization of homologous single-stranded DNAs. It interacts with LexA causing its activation and leading to its autocatalytic cleavage. This chain is Protein RecA, found in Haemophilus ducreyi (strain 35000HP / ATCC 700724).